Here is a 618-residue protein sequence, read N- to C-terminus: uncharacterized protein (618 aa).

Disordered stretches follow at residues 70–118 (SSEY…SLPR), 330–352 (LTAR…EVPC), 456–552 (TLPV…PILT), and 587–618 (IPSD…LKTL). Composition is skewed to basic and acidic residues over residues 74–84 (KGTRRDSRGYE) and 333–343 (RTEEEPERHVP). Residues 463–481 (TSRPQSPSSLSSKTTGLPL) show a composition bias toward low complexity. 2 stretches are compositionally biased toward polar residues: residues 485–516 (KPTS…NSLM) and 609–618 (SDPSHSLKTL).

This is an uncharacterized protein from Danio rerio (Zebrafish).